Reading from the N-terminus, the 157-residue chain is Baculoviral IAP repeat-containing protein 5.2-B (157 aa).

The stretch at 31 to 101 is one BIR repeat; that stretch reads RLRTFSNWPF…KHSPSCLFIA (71 aa). A Phosphothreonine; by CDK1 modification is found at T47. Zn(2+) contacts are provided by C70, C73, H90, and C97.

It belongs to the IAP family. As to quaternary structure, component of the CPC at least composed of survivin/birc5, incenp, cdca8/borealin and/or cdca9/dasra-A, and aurkb/aurora-B. Interacts directly with incenp (via N-terminus). Interacts with rxra; the interaction is stronger in the absence of 9-cis retinoic acids. Post-translationally, ubiquitination is required for centrosome-targeting. In terms of tissue distribution, exhibits strong and homogeneous expression in developing oocytes. In embryos, expressed in the animal hemisphere from one-cell to yolk plug stages, and highly expressed in the future brain and dorsal region of the neural tube at the neurula stage and early tail-bud stage. At tadpole stages, expression is restricted at a low level to the head region.

Its subcellular location is the cytoplasm. It is found in the nucleus. The protein localises to the chromosome. The protein resides in the centromere. It localises to the cytoskeleton. Its subcellular location is the spindle. Functionally, does not appear to exhibit anti-apoptotic activity. Plays a role in increasing blood vessel size during development. Component of the chromosomal passenger complex (CPC), a complex that acts as a key regulator of mitosis. The CPC complex has essential functions at the centromere in ensuring correct chromosome alignment and segregation and is required for chromatin-induced microtubule stabilization and spindle assembly. This is Baculoviral IAP repeat-containing protein 5.2-B (birc5.2-b) from Xenopus laevis (African clawed frog).